A 316-amino-acid polypeptide reads, in one-letter code: 4-hydroxy-3-methylbut-2-enyl diphosphate reductase (316 aa).

Cys12 serves as a coordination point for [4Fe-4S] cluster. His41 and His74 together coordinate (2E)-4-hydroxy-3-methylbut-2-enyl diphosphate. Residues His41 and His74 each coordinate dimethylallyl diphosphate. 2 residues coordinate isopentenyl diphosphate: His41 and His74. A [4Fe-4S] cluster-binding site is contributed by Cys96. His124 lines the (2E)-4-hydroxy-3-methylbut-2-enyl diphosphate pocket. Position 124 (His124) interacts with dimethylallyl diphosphate. Residue His124 participates in isopentenyl diphosphate binding. The active-site Proton donor is Glu126. Thr167 lines the (2E)-4-hydroxy-3-methylbut-2-enyl diphosphate pocket. Cys197 is a [4Fe-4S] cluster binding site. Residues Ser225, Ser226, Asn227, and Ser269 each contribute to the (2E)-4-hydroxy-3-methylbut-2-enyl diphosphate site. Dimethylallyl diphosphate is bound by residues Ser225, Ser226, Asn227, and Ser269. Residues Ser225, Ser226, Asn227, and Ser269 each coordinate isopentenyl diphosphate.

The protein belongs to the IspH family. In terms of assembly, homodimer. It depends on [4Fe-4S] cluster as a cofactor.

The catalysed reaction is isopentenyl diphosphate + 2 oxidized [2Fe-2S]-[ferredoxin] + H2O = (2E)-4-hydroxy-3-methylbut-2-enyl diphosphate + 2 reduced [2Fe-2S]-[ferredoxin] + 2 H(+). The enzyme catalyses dimethylallyl diphosphate + 2 oxidized [2Fe-2S]-[ferredoxin] + H2O = (2E)-4-hydroxy-3-methylbut-2-enyl diphosphate + 2 reduced [2Fe-2S]-[ferredoxin] + 2 H(+). It participates in isoprenoid biosynthesis; dimethylallyl diphosphate biosynthesis; dimethylallyl diphosphate from (2E)-4-hydroxy-3-methylbutenyl diphosphate: step 1/1. It functions in the pathway isoprenoid biosynthesis; isopentenyl diphosphate biosynthesis via DXP pathway; isopentenyl diphosphate from 1-deoxy-D-xylulose 5-phosphate: step 6/6. Catalyzes the conversion of 1-hydroxy-2-methyl-2-(E)-butenyl 4-diphosphate (HMBPP) into a mixture of isopentenyl diphosphate (IPP) and dimethylallyl diphosphate (DMAPP). Acts in the terminal step of the DOXP/MEP pathway for isoprenoid precursor biosynthesis. The protein is 4-hydroxy-3-methylbut-2-enyl diphosphate reductase of Pectobacterium carotovorum subsp. carotovorum (strain PC1).